The sequence spans 1147 residues: ATP-dependent helicase/deoxyribonuclease subunit B (1147 aa).

Position 8-15 (8-15 (GGSGAGKS)) interacts with ATP. Residues cysteine 780, cysteine 1092, cysteine 1095, and cysteine 1101 each contribute to the [4Fe-4S] cluster site.

The protein belongs to the helicase family. AddB/RexB type 1 subfamily. As to quaternary structure, heterodimer of AddA and AddB. It depends on Mg(2+) as a cofactor. Requires [4Fe-4S] cluster as cofactor.

Its function is as follows. The heterodimer acts as both an ATP-dependent DNA helicase and an ATP-dependent, dual-direction single-stranded exonuclease. Recognizes the chi site generating a DNA molecule suitable for the initiation of homologous recombination. The AddB subunit has 5' -&gt; 3' nuclease activity but not helicase activity. This is ATP-dependent helicase/deoxyribonuclease subunit B from Lachnoclostridium phytofermentans (strain ATCC 700394 / DSM 18823 / ISDg) (Clostridium phytofermentans).